A 73-amino-acid chain; its full sequence is Putative defensin-like protein 33 (73 aa).

An N-terminal signal peptide occupies residues 1–25; the sequence is MASNKVSFIFILFLCVLSTAEFGEA. 3 disulfides stabilise this stretch: Cys33–Cys59, Cys45–Cys68, and Cys49–Cys70.

This sequence belongs to the DEFL family.

It is found in the secreted. This Arabidopsis thaliana (Mouse-ear cress) protein is Putative defensin-like protein 33.